The following is a 153-amino-acid chain: UPF0158 protein PA5073 (153 aa).

It belongs to the UPF0158 family.

In Pseudomonas aeruginosa (strain ATCC 15692 / DSM 22644 / CIP 104116 / JCM 14847 / LMG 12228 / 1C / PRS 101 / PAO1), this protein is UPF0158 protein PA5073.